Here is a 269-residue protein sequence, read N- to C-terminus: Formamidopyrimidine-DNA glycosylase (269 aa).

Pro-2 functions as the Schiff-base intermediate with DNA in the catalytic mechanism. Catalysis depends on Glu-3, which acts as the Proton donor. Lys-57 serves as the catalytic Proton donor; for beta-elimination activity. DNA-binding residues include His-90, Arg-109, and Lys-150. Residues 235–269 form an FPG-type zinc finger; it reads RVYGRNGEPCRTCGTPIETAKHGQRSTFFCRRCQK. The Proton donor; for delta-elimination activity role is filled by Arg-259.

The protein belongs to the FPG family. As to quaternary structure, monomer. Zn(2+) serves as cofactor.

It carries out the reaction Hydrolysis of DNA containing ring-opened 7-methylguanine residues, releasing 2,6-diamino-4-hydroxy-5-(N-methyl)formamidopyrimidine.. It catalyses the reaction 2'-deoxyribonucleotide-(2'-deoxyribose 5'-phosphate)-2'-deoxyribonucleotide-DNA = a 3'-end 2'-deoxyribonucleotide-(2,3-dehydro-2,3-deoxyribose 5'-phosphate)-DNA + a 5'-end 5'-phospho-2'-deoxyribonucleoside-DNA + H(+). Functionally, involved in base excision repair of DNA damaged by oxidation or by mutagenic agents. Acts as a DNA glycosylase that recognizes and removes damaged bases. Has a preference for oxidized purines, such as 7,8-dihydro-8-oxoguanine (8-oxoG). Has AP (apurinic/apyrimidinic) lyase activity and introduces nicks in the DNA strand. Cleaves the DNA backbone by beta-delta elimination to generate a single-strand break at the site of the removed base with both 3'- and 5'-phosphates. This is Formamidopyrimidine-DNA glycosylase from Pectobacterium carotovorum subsp. carotovorum (strain PC1).